The chain runs to 36 residues: Beta-amanitin proprotein (36 aa).

Residues 1 to 10 (MSDINATRLP) constitute a propeptide that is removed on maturation. Residues 11 to 18 (IWGIGCDP) constitute a cross-link (cyclopeptide (Ile-Pro)). The segment at residues 12–16 (WGIGC) is a cross-link (2'-cysteinyl-6'-hydroxytryptophan sulfoxide (Trp-Cys)). The propeptide occupies 19–36 (CIGDDVTALLTRGEASLC).

It belongs to the MSDIN fungal toxin family. In terms of processing, processed by the macrocyclase-peptidase enzyme POPB to yield a toxic cyclic decapeptide. POPB first removes 10 residues from the N-terminus. Conformational trapping of the remaining peptide forces the enzyme to release this intermediate rather than proceed to macrocyclization. The enzyme rebinds the remaining peptide in a different conformation and catalyzes macrocyclization of the N-terminal 8 residues.

In terms of biological role, toxin belonging to the bicyclic octapeptides amatoxins that acts by binding non-competitively to RNA polymerase II and greatly slowing the elongation of transcripts from target promoters. This chain is Beta-amanitin proprotein, found in Amanita phalloides (Death cap).